The sequence spans 307 residues: Ribulose bisphosphate carboxylase/oxygenase activase, chloroplastic (307 aa).

A chloroplast-targeting transit peptide spans 1–46; it reads MSIPDDKEAGTIDEFLQKEGVLDILQKLDHDLVGLKPVKDRVREIA. 73-80 contacts ATP; sequence GSPGTGKT.

This sequence belongs to the CbxX/CfxQ family. Forms homooligomers. Forms heterohexameric rings with the plastid-encoded Rca subunit consisting of 3 of each nuclear- and plastidial-encoded subunits that alternate in the ring.

Its subcellular location is the plastid. It localises to the chloroplast. Functionally, required for the expression of ribulose 1,5-bisphosphate carboxylase/oxygenase (RuBisCo). ATPase involved in the activation of red-type RuBisCo, which tends to form inactive complexes with its substrate ribulose 1,5-bisphosphate (RuBP). Catalyzes the release of RuBP from inhibited RuBisCo in an ATP-dependent manner. Activation of RuBisCO involves the ATP-dependent carboxylation of the epsilon-amino group of lysine leading to a carbamate structure. The nuclear-encoded subunit plays a more critical role in activase function than the plastidial-encoded subunit. In Cyanidioschyzon merolae (strain NIES-3377 / 10D) (Unicellular red alga), this protein is Ribulose bisphosphate carboxylase/oxygenase activase, chloroplastic.